The sequence spans 383 residues: 3-phytase (383 aa).

Positions 1 to 26 (MNHSKTLLLTAAAGLMLTCGAVSSQA) are cleaved as a signal peptide. A propeptide spanning residues 27–29 (KHK) is cleaved from the precursor. In terms of domain architecture, BPP spans 30 to 362 (LSDPYHFTVN…VPWERIADQI (333 aa)).

It depends on Ca(2+) as a cofactor.

The protein localises to the secreted. It catalyses the reaction 1D-myo-inositol hexakisphosphate + H2O = 1D-myo-inositol 1,2,4,5,6-pentakisphosphate + phosphate. Functionally, catalyzes the hydrolysis of inorganic orthophosphate from phytate. Only phytate, ADP, and ATP were hydrolyzed (100, 75, and 50% of the relative activity, respectively). This Bacillus subtilis protein is 3-phytase (phyC).